The sequence spans 1325 residues: MSDAVILRSVKKFGEDNYGFESSTFYNNDKNSGLQDERKGDSSQVGFFQLFRFSSTTDIWLMFVGSLCAFLHGLSHPGVLLIFGTMTDVFIAYDTELQELKIPGKACVNNTIVWINSSLNQNVTNGTQCGLLDIESEMIKFASYYAGIALLVLITGYIQICFWVIAAARQIQKMRKISFRKVMRMEIGWFDCNSVGELNTRFSDDINRVNDAIADQMPIFIQRMTTSICGFLLGFYQGWKLTLVIISVSPLIGIGAAIIGLSVSKFTDYELKAYAKAGSVADEVISSMRTVAAFGGEKKEVERYEKNLVFAQRWGIRKGIVMGFFTGFMWCLIFLCYALAFWYGSKLVLEDGEYTAGTLVQIFLSILLGALNLGNASSCLEAFATGRAAATSIFHTIDRKPIIDCMSEDGYKLDRIKGEIEFHNVTFHYPSRPEVKILNNLSMVIKSGEMTAVVGSSGSGKSTALQLIQRFYDPSEGMVTLDGHDIRSLNIQWLRTQIGIVEQEPVLFSTTIAENIRYGREDATMEDIVRAAKAANAYNFIMDLPEQFDTLVGEGGGQMSGGQKQRVAIARALVRNPKILLLDMATSALDNESEAMVQEALSKIQQGHTIISVAHRLSTVRAADVIIGFEHGTAVERGSHEELLERKGVYFTLVTLQSQGEPTANAEGIRGEEETDGVSLDNEQTFCRGSYQSSLRASLRQRSKSQLSYLAHEPPLAVVDHKSTYEEDRKDKDIPVEEEIEPAPVRRILKFNAPEWPYMLFGAVGAAVNGSVTPLYAFLFSQILGTFSLPDKEEQRSQINGVCLLFVAVGCVSLCTQFLQGYAFAKSGELLTKRLRKYGFRAMLGQDIGWFDDLRNSPGALTTRLATDASQVQGAAGSQIGMMVNSFTNVTVAMIIAFFFSWKLSLVIMCFFPFLALSGALQTRMLTGFATQDKEALEIAGQITNEALSNIRTVAGIGKERQFIEAFEAELEKPFKTAFRKANVYGFCFGFSQCIVFVANSASYRYGGYLIPNEGLHFSYVFRVISSVVLSATALGRASSYTPSYAKAKISAARFFQLLDRQPPIKVYSSAGEKWDNFQGQVDFVDCKFTYPSRPDTQVLNGLSVSVRPGQTLAFVGSSGCGKSTSIQLLERFYDPDQGKVMIDGHDSRKVNVQFLRSNIGIVSQEPVLFACSIMDNIKYGDNTREIPMEKVIEAAKQAQLHDFVMSLPEKYETNVGSQGSQLSRGEKQRIAIARAIVRNPKILLLDEATSALDTESEKTVQVALDKAREGRTCIVIAHRLSTIQNSDIIAVMSQGIVIEKGTHEELMAQKGAYYKLVTTGAPIS.

Topologically, residues 1–62 (MSDAVILRSV…FSSTTDIWLM (62 aa)) are cytoplasmic. One can recognise an ABC transmembrane type-1 1 domain in the interval 62 to 385 (MFVGSLCAFL…ASSCLEAFAT (324 aa)). The chain crosses the membrane as a helical span at residues 63–83 (FVGSLCAFLHGLSHPGVLLIF). Over 84-147 (GTMTDVFIAY…MIKFASYYAG (64 aa)) the chain is Extracellular. Residues Asn109, Asn116, Asn122, and Asn125 are each glycosylated (N-linked (GlcNAc...) asparagine). Residues 148-168 (IALLVLITGYIQICFWVIAAA) traverse the membrane as a helical segment. The Cytoplasmic segment spans residues 169–240 (RQIQKMRKIS…FLLGFYQGWK (72 aa)). A helical membrane pass occupies residues 241–261 (LTLVIISVSPLIGIGAAIIGL). Residues 262–319 (SVSKFTDYELKAYAKAGSVADEVISSMRTVAAFGGEKKEVERYEKNLVFAQRWGIRKG) lie on the Extracellular side of the membrane. The helical transmembrane segment at 320–340 (IVMGFFTGFMWCLIFLCYALA) threads the bilayer. Topologically, residues 341–353 (FWYGSKLVLEDGE) are cytoplasmic. The helical transmembrane segment at 354–374 (YTAGTLVQIFLSILLGALNLG) threads the bilayer. N-linked (GlcNAc...) asparagine glycans are attached at residues Asn375, Asn424, and Asn440. The Extracellular portion of the chain corresponds to 375–759 (NASSCLEAFA…KFNAPEWPYM (385 aa)). The ABC transporter 1 domain occupies 420-656 (IEFHNVTFHY…KGVYFTLVTL (237 aa)). 455–462 (GSSGSGKS) lines the ATP pocket. N-linked (GlcNAc...) asparagine glycosylation occurs at Asn591. Residues 759-1047 (MLFGAVGAAV…ASSYTPSYAK (289 aa)) enclose the ABC transmembrane type-1 2 domain. A helical membrane pass occupies residues 760-780 (LFGAVGAAVNGSVTPLYAFLF). Residues 781-798 (SQILGTFSLPDKEEQRSQ) lie on the Cytoplasmic side of the membrane. The helical transmembrane segment at 799–819 (INGVCLLFVAVGCVSLCTQFL) threads the bilayer. Over 820-894 (QGYAFAKSGE…NSFTNVTVAM (75 aa)) the chain is Extracellular. A glycan (N-linked (GlcNAc...) asparagine) is linked at Asn889. The chain crosses the membrane as a helical span at residues 895–915 (IIAFFFSWKLSLVIMCFFPFL). Residues 916 to 983 (ALSGALQTRM…PFKTAFRKAN (68 aa)) are Cytoplasmic-facing. Residues 984–1004 (VYGFCFGFSQCIVFVANSASY) form a helical membrane-spanning segment. Over 1005–1014 (RYGGYLIPNE) the chain is Extracellular. Residues 1015–1035 (GLHFSYVFRVISSVVLSATAL) traverse the membrane as a helical segment. At 1036 to 1325 (GRASSYTPSY…KLVTTGAPIS (290 aa)) the chain is on the cytoplasmic side. Residues 1082-1320 (VDFVDCKFTY…KGAYYKLVTT (239 aa)) enclose the ABC transporter 2 domain. An ATP-binding site is contributed by 1117–1124 (GSSGCGKS).

Belongs to the ABC transporter superfamily. ABCB family. Multidrug resistance exporter (TC 3.A.1.201) subfamily. Interacts with HAX1. Interacts with the adapter protein complex 2 (AP-2) throught AP2A2 or AP2A1; this interaction regulates cell membrane expression of ABCB11 through its internalization in a clathrin-dependent manner and its subsequent degradation. Post-translationally, N-glycosylated. In terms of processing, ubiquitinated; short-chain ubiquitination regulates cell-Surface expression of ABCB11. Liver.

It localises to the apical cell membrane. Its subcellular location is the recycling endosome membrane. The protein localises to the endosome. It is found in the cell membrane. The catalysed reaction is cholate(in) + ATP + H2O = cholate(out) + ADP + phosphate + H(+). The enzyme catalyses taurocholate(in) + ATP + H2O = taurocholate(out) + ADP + phosphate + H(+). It carries out the reaction glycocholate(in) + ATP + H2O = glycocholate(out) + ADP + phosphate + H(+). It catalyses the reaction glycochenodeoxycholate(in) + ATP + H2O = glycochenodeoxycholate(out) + ADP + phosphate + H(+). The catalysed reaction is taurochenodeoxycholate(in) + ATP + H2O = taurochenodeoxycholate(out) + ADP + phosphate + H(+). The enzyme catalyses glycoursodeoxycholate(in) + ATP + H2O = glycoursodeoxycholate(out) + ADP + phosphate + H(+). It carries out the reaction tauroursodeoxycholate(in) + ATP + H2O = tauroursodeoxycholate(out) + ADP + phosphate + H(+). It catalyses the reaction taurodeoxycholate(in) + ATP + H2O = taurodeoxycholate(out) + ADP + phosphate + H(+). The catalysed reaction is taurolithocholate 3-sulfate(in) + ATP + H2O = taurolithocholate 3-sulfate(out) + ADP + phosphate + H(+). The enzyme catalyses pravastatin(in) + ATP + H2O = pravastatin(out) + ADP + phosphate + H(+). Its activity is regulated as follows. The uptake of taurocholate is inhibited by taurolithocholate sulfate with an IC(50) of 9 uM. Pravastatin competitively inhibits the transport of taurocholic acid. Cyclosporin A, glibenclamide, rifampicin and troglitazonestrongly competitively inhibit the transport activity of taurocholate. The canalicular transport activity of taurocholate is strongly dependent on canalicular membrane cholesterol content. The uptake of taurocholate is increased by short- and medium-chain fatty acids. Cholesterol increases transport capacity of taurocholate without affecting the affinity for the substrate. Its function is as follows. Catalyzes the transport of the major hydrophobic bile salts, such as taurine and glycine-conjugated cholic acid across the canalicular membrane of hepatocytes in an ATP-dependent manner, therefore participates in hepatic bile acid homeostasis and consequently to lipid homeostasis through regulation of biliary lipid secretion in a bile salts dependent manner. Transports taurine-conjugated bile salts more rapidly than glycine-conjugated bile salts. Also transports non-bile acid compounds, such as pravastatin and fexofenadine in an ATP-dependent manner and may be involved in their biliary excretion. The sequence is that of Bile salt export pump from Canis lupus familiaris (Dog).